We begin with the raw amino-acid sequence, 290 residues long: Porphobilinogen deaminase (290 aa).

Cys-237 bears the S-(dipyrrolylmethanemethyl)cysteine mark.

The protein belongs to the HMBS family. As to quaternary structure, monomer. Dipyrromethane serves as cofactor.

It catalyses the reaction 4 porphobilinogen + H2O = hydroxymethylbilane + 4 NH4(+). It participates in porphyrin-containing compound metabolism; protoporphyrin-IX biosynthesis; coproporphyrinogen-III from 5-aminolevulinate: step 2/4. Its function is as follows. Tetrapolymerization of the monopyrrole PBG into the hydroxymethylbilane pre-uroporphyrinogen in several discrete steps. This Clostridium kluyveri (strain NBRC 12016) protein is Porphobilinogen deaminase.